Reading from the N-terminus, the 511-residue chain is Glucans biosynthesis protein G (511 aa).

The N-terminal stretch at 1–22 (MMKMRWLSAAVMLTLYTSSSWA) is a signal peptide.

This sequence belongs to the OpgD/OpgG family.

The protein resides in the periplasm. It participates in glycan metabolism; osmoregulated periplasmic glucan (OPG) biosynthesis. Its function is as follows. Involved in the biosynthesis of osmoregulated periplasmic glucans (OPGs). This Escherichia fergusonii (strain ATCC 35469 / DSM 13698 / CCUG 18766 / IAM 14443 / JCM 21226 / LMG 7866 / NBRC 102419 / NCTC 12128 / CDC 0568-73) protein is Glucans biosynthesis protein G.